A 364-amino-acid polypeptide reads, in one-letter code: Triacylglycerol lipase (364 aa).

The N-terminal stretch at 1–44 is a signal peptide; that stretch reads MARTMRSRVVAGAVACAMSIAPFAGTTAVMTLATTHAAMAATAP. The AB hydrolase-1 domain occupies 54 to 266; the sequence is PIILVHGLSG…AIQPTLSVFG (213 aa). Residue L61 participates in substrate binding. S131 (nucleophile) is an active-site residue. Q132 is a substrate binding site. A disulfide bridge links C234 with C314. D286 contributes to the Ca(2+) binding site. Residues D308 and H330 each act as charge relay system in the active site. Residues D332, Q336, and V340 each coordinate Ca(2+).

The protein belongs to the AB hydrolase superfamily. Pseudomonas lipase family. As to quaternary structure, monomer. Ca(2+) serves as cofactor.

It is found in the secreted. It catalyses the reaction a triacylglycerol + H2O = a diacylglycerol + a fatty acid + H(+). With respect to regulation, inhibited by RC-(Rp,Sp)- and SC-(Rp,Sp)-1,2-dioctylcarbamoylglycero-3-O-p-nitrophenyl octylphosphonate. Also inhibited by diethyl-p-nitrophenylphosphate (E600). Catalyzes the hydrolysis of triacylglycerol. It shows a preference for triacylglycerols with a chain length between 6 and 12 carbons. This Burkholderia cepacia (Pseudomonas cepacia) protein is Triacylglycerol lipase.